A 318-amino-acid polypeptide reads, in one-letter code: Ribose-phosphate pyrophosphokinase (318 aa).

Residues 43–45 and 102–103 contribute to the ATP site; these read DGE and RQ. His-136 and Asp-176 together coordinate Mg(2+). The active site involves Lys-199. D-ribose 5-phosphate is bound by residues Arg-201, Asp-225, and 229 to 233; that span reads DTAGT.

The protein belongs to the ribose-phosphate pyrophosphokinase family. Class I subfamily. Homohexamer. Mg(2+) serves as cofactor.

The protein localises to the cytoplasm. The enzyme catalyses D-ribose 5-phosphate + ATP = 5-phospho-alpha-D-ribose 1-diphosphate + AMP + H(+). It participates in metabolic intermediate biosynthesis; 5-phospho-alpha-D-ribose 1-diphosphate biosynthesis; 5-phospho-alpha-D-ribose 1-diphosphate from D-ribose 5-phosphate (route I): step 1/1. Its function is as follows. Involved in the biosynthesis of the central metabolite phospho-alpha-D-ribosyl-1-pyrophosphate (PRPP) via the transfer of pyrophosphoryl group from ATP to 1-hydroxyl of ribose-5-phosphate (Rib-5-P). The chain is Ribose-phosphate pyrophosphokinase from Listeria ivanovii.